A 371-amino-acid polypeptide reads, in one-letter code: Glutamate 5-kinase (371 aa).

Lys10 is an ATP binding site. Residues Ser50, Asp137, and Asn149 each coordinate substrate. ATP is bound by residues 169–170 (SD) and 208–214 (TGGMYTK). One can recognise a PUA domain in the interval 274 to 352 (QGKVYIDDGA…EEIKNILGED (79 aa)).

This sequence belongs to the glutamate 5-kinase family.

It is found in the cytoplasm. The enzyme catalyses L-glutamate + ATP = L-glutamyl 5-phosphate + ADP. It functions in the pathway amino-acid biosynthesis; L-proline biosynthesis; L-glutamate 5-semialdehyde from L-glutamate: step 1/2. Its function is as follows. Catalyzes the transfer of a phosphate group to glutamate to form L-glutamate 5-phosphate. The polypeptide is Glutamate 5-kinase (Dictyoglomus thermophilum (strain ATCC 35947 / DSM 3960 / H-6-12)).